The following is a 529-amino-acid chain: 1,4-beta-D-glucan cellobiohydrolase xynA (529 aa).

An N-terminal signal peptide occupies residues M1–A25. The catalytic stretch occupies residues Q26 to S456. Residues N70 and N219 are each glycosylated (N-linked (GlcNAc...) asparagine). E234 (nucleophile) is an active-site residue. E239 (proton donor) is an active-site residue. N-linked (GlcNAc...) asparagine glycosylation is present at N413. The tract at residues N413–Q438 is disordered. The segment covering C425–Q438 has biased composition (polar residues). Residue N455 is glycosylated (N-linked (GlcNAc...) asparagine). A thr-rich linker region spans residues T457 to G493. Positions G460–G491 are disordered. Positions G493–L529 constitute a CBM1 domain. 2 cysteine pairs are disulfide-bonded: C501/C518 and C512/C528.

Belongs to the glycosyl hydrolase 7 (cellulase C) family.

Its subcellular location is the secreted. It catalyses the reaction Hydrolysis of (1-&gt;4)-beta-D-glucosidic linkages in cellulose and cellotetraose, releasing cellobiose from the non-reducing ends of the chains.. Its activity is regulated as follows. Cellobiose inhibits xynA at high concentrations. In terms of biological role, the biological conversion of cellulose to glucose generally requires three types of hydrolytic enzymes: (1) Endoglucanases which cut internal beta-1,4-glucosidic bonds; (2) Exocellobiohydrolases that cut the disaccharide cellobiose from the non-reducing end of the cellulose polymer chain; (3) Beta-1,4-glucosidases which hydrolyze the cellobiose and other short cello-oligosaccharides to glucose. This chain is 1,4-beta-D-glucan cellobiohydrolase xynA (xynA), found in Talaromyces funiculosus (Fruitlet core rot fungus).